A 256-amino-acid chain; its full sequence is Protein FixA (256 aa).

It belongs to the ETF beta-subunit/FixA family. As to quaternary structure, heterodimer of FixA and FixB.

Its pathway is amine and polyamine metabolism; carnitine metabolism. In terms of biological role, required for anaerobic carnitine reduction. May bring reductant to CaiA. This Salmonella paratyphi B (strain ATCC BAA-1250 / SPB7) protein is Protein FixA.